A 181-amino-acid chain; its full sequence is Ribosome-recycling factor (181 aa).

Residues 131 to 154 (RRDAMDSVKKEKEMPEDDVRKAEN) are disordered.

This sequence belongs to the RRF family.

Its subcellular location is the cytoplasm. Responsible for the release of ribosomes from messenger RNA at the termination of protein biosynthesis. May increase the efficiency of translation by recycling ribosomes from one round of translation to another. This Leuconostoc citreum (strain KM20) protein is Ribosome-recycling factor.